We begin with the raw amino-acid sequence, 459 residues long: Zinc finger transcription factor lin-29 (459 aa).

The segment covering 1–14 (MDQTVLDSAFNSPV) has biased composition (polar residues). Residues 1–73 (MDQTVLDSAF…GSTGSTPAHH (73 aa)) are disordered. A compositionally biased stretch (low complexity) spans 16–56 (SGIAGTTTGSGSTTHFGVGTNFKVSVRSSSRSTDGTDSTDG). Residues 57 to 73 (ANSDNVTGSTGSTPAHH) are compositionally biased toward polar residues. 5 consecutive C2H2-type zinc fingers follow at residues 151-173 (YKCT…MRIH), 180-202 (GPCN…IRTH), 208-232 (YKCK…SRCH), 238-260 (FKCN…IPKH), and 269-291 (HICP…MTKH). Residues 390 to 406 (PGFNMITPLENIQRYNG) form an interacts with mab-10 region. Positions 423–444 (VSSTPSSTSSSSAGSSSSQGGV) are enriched in low complexity. Positions 423–459 (VSSTPSSTSSSSAGSSSSQGGVFNPQSLINNMKNHSY) are disordered. Polar residues predominate over residues 446 to 459 (NPQSLINNMKNHSY).

In terms of assembly, interacts (via C-terminus) with transcription cofactor mab-10. Expressed in lateral hypodermal seam cells (at protein level).

The protein resides in the nucleus. In terms of biological role, transcription factor which regulates the expression of various genes, including those involved in cuticle synthesis and maintenance, such as collagens, and in lipid metabolism. Binds to promoter regions of genes, at 5'-[(T/G)TTTTTT(A/T/C/G)]-3' consensus sequences. Heterochronic protein which controls the choice of stage specific cell fates, including at the juvenile to adult transition. Promotes differentiation, together with transcriptional cofactor mab-10, perhaps as part of a transcriptional complex. Required for vulval morphogenesis and egg laying; perhaps by acting in a subset of the lateral seam cells. Involved in the exit of seam cells from the cell cycle. Required for specification of uterine pi-cell fate, acting upstream of lin-12 Notch signaling, perhaps via maintenance of lag-2 expression in the anchor cell (AC). Involved in morphogenesis of the specialized male tail used in mating. Acts cell non-autonomously from the hypodermis to regulate expression of genes in the intestine, including genes involved in lipid metabolism. May regulate vitellogenesis via the mTORC2 signaling mediated pathway, independently of daf-16. May promote nuclear accumulation of mab-10 in seam cells post-transcriptionally. Dispensable for seam cell fusion. Functionally, required for seam cell fusion. The chain is Zinc finger transcription factor lin-29 from Caenorhabditis elegans.